Consider the following 476-residue polypeptide: Protein transport protein Sec61 subunit alpha (476 aa).

Over 2–33 (GIKFLEVIKPFCAVLPEIQKPERKIQFREKVL) the chain is Cytoplasmic. The helical transmembrane segment at 34 to 53 (WTAITLFIFLVCCQIPLFGI) threads the bilayer. Over 54 to 76 (MSSDSADPFYWMRVILASNRGTL) the chain is Lumenal. A helical transmembrane segment spans residues 77 to 96 (MELGISPIVTSDLIMQLLAG). At 97 to 117 (AKIIEVGDSPKDRALFNGAQK) the chain is on the cytoplasmic side. A helical membrane pass occupies residues 118 to 138 (LFGMIITIGQAIVYVMTGMYG). The Lumenal portion of the chain corresponds to 139 to 144 (DPSEMG). Residues 145-165 (AGICLVIIIQLFVAGLIVLLL) traverse the membrane as a helical segment. Residues 166–172 (DELLQKG) lie on the Cytoplasmic side of the membrane. A helical transmembrane segment spans residues 173–193 (YGLGSGISLLIATNICETIVW). Residues 194-240 (KAFSPTTVNTGRGTEFEGAIIALFHLLATRTDKVRALREAFYRQNLP) lie on the Lumenal side of the membrane. A helical transmembrane segment spans residues 241–261 (NLMNLIATVFVFAVVIYFQGF). Residues 262–288 (RVDLPIKSARYRGQYNTYPIKLFYTSN) are Cytoplasmic-facing. The helical transmembrane segment at 289–309 (IPIILQSALVSNLYVISQMLS) threads the bilayer. Residues 310 to 354 (TRFSGNFIVNLLGTWSDTSTGGPARAYPVGGLCYFLSPPESFGSV) are Lumenal-facing. Residues 355–375 (LDDPVHAAIYIVFMLGSCAFF) form a helical membrane-spanning segment. Topologically, residues 376–420 (SKTWIEVSGSSAKDVAKQLKEQQMVMRGHRETSMVHELNRYIPTA) are cytoplasmic. The chain crosses the membrane as a helical span at residues 421 to 441 (AAFGGLCIGGLSVMADFLGAI). Residues 442 to 445 (GSGT) are Lumenal-facing. A helical transmembrane segment spans residues 446–462 (GILLAVTIIYQYFEIFV). Topologically, residues 463-476 (KEQSEMGSMGGLFF) are cytoplasmic.

It belongs to the SecY/SEC61-alpha family. As to quaternary structure, the SEC61 channel-forming translocon complex consists of channel-forming core components SEC61A1, SEC61B and SEC61G and different auxiliary components such as SEC62 and SEC63. The SEC61 channel associates with the multi-pass translocon (MPT) complex.

The protein resides in the endoplasmic reticulum membrane. Its function is as follows. Component of SEC61 channel-forming translocon complex that mediates transport of signal peptide-containing precursor polypeptides across the endoplasmic reticulum (ER). Forms a ribosome receptor and a gated pore in the ER membrane, both functions required for cotranslational translocation of nascent polypeptides. May cooperate with auxiliary protein SEC62, SEC63 and HSPA5/BiP to enable post-translational transport of small presecretory proteins. The SEC61 channel is also involved in ER membrane insertion of transmembrane proteins: it mediates membrane insertion of the first few transmembrane segments of proteins, while insertion of subsequent transmembrane regions of multi-pass membrane proteins is mediated by the multi-pass translocon (MPT) complex. The sequence is that of Protein transport protein Sec61 subunit alpha (sec61a) from Boreogadus saida (Polar cod).